Here is a 487-residue protein sequence, read N- to C-terminus: Malonate-semialdehyde dehydrogenase 2 (487 aa).

Residues Phe154, Lys178, Glu181, Arg182, and Ser231 each coordinate NAD(+). Cys286 acts as the Nucleophile in catalysis. Glu386 contacts NAD(+).

Belongs to the aldehyde dehydrogenase family. IolA subfamily. In terms of assembly, homotetramer.

The enzyme catalyses 3-oxopropanoate + NAD(+) + CoA + H2O = hydrogencarbonate + acetyl-CoA + NADH + H(+). The catalysed reaction is 2-methyl-3-oxopropanoate + NAD(+) + CoA + H2O = propanoyl-CoA + hydrogencarbonate + NADH + H(+). It functions in the pathway polyol metabolism; myo-inositol degradation into acetyl-CoA; acetyl-CoA from myo-inositol: step 7/7. Functionally, catalyzes the oxidation of malonate semialdehyde (MSA) and methylmalonate semialdehyde (MMSA) into acetyl-CoA and propanoyl-CoA, respectively. Is involved in a myo-inositol catabolic pathway. Bicarbonate, and not CO2, is the end-product of the enzymatic reaction. This chain is Malonate-semialdehyde dehydrogenase 2, found in Bacillus thuringiensis (strain Al Hakam).